Reading from the N-terminus, the 169-residue chain is Translocator protein (169 aa).

Over 2–5 (APPW) the chain is Mitochondrial intermembrane. A helical membrane pass occupies residues 6-26 (VPAMGFTLAPSLGCFVGSRFV). Residues 27-46 (HGEGLRWYAGLQKPSWHPPH) lie on the Cytoplasmic side of the membrane. Residues 47–67 (WVLGPVWGTLYSAMGYGSYLV) traverse the membrane as a helical segment. Over 68 to 79 (WKELGGFTEKAV) the chain is Mitochondrial intermembrane. A helical transmembrane segment spans residues 80-100 (VPLGLYTGQLALNWAWPPIFF). Topologically, residues 101 to 105 (GARQM) are cytoplasmic. The helical transmembrane segment at 106 to 126 (GWALVDLLLVSGAAAATTVAW) threads the bilayer. Topologically, residues 127 to 134 (YQVSPLAA) are mitochondrial intermembrane. The helical transmembrane segment at 135 to 155 (RLLYPYLAWLAFTTTLNYCVW) threads the bilayer. Residues 156–169 (RDNHGWRGGRRLPE) lie on the Cytoplasmic side of the membrane.

Belongs to the TspO/BZRP family. As to quaternary structure, interacts with TSPOAP1. May interact with STAR. Interacts with MOST-1. Interacts with TMEM97. Forms a complex with TMEM97 and PGRMC1; the interaction occurs in MIA PaCa-2 cells but not in MCF7 cells. Found in many tissue types. Expressed at the highest levels under normal conditions in tissues that synthesize steroids.

It is found in the mitochondrion membrane. Functionally, can bind protoporphyrin IX and may play a role in the transport of porphyrins and heme. Promotes the transport of cholesterol across mitochondrial membranes and may play a role in lipid metabolism, but its precise physiological role is controversial. It is apparently not required for steroid hormone biosynthesis. Was initially identified as peripheral-type benzodiazepine receptor; can also bind isoquinoline carboxamides. In Homo sapiens (Human), this protein is Translocator protein (TSPO).